An 82-amino-acid polypeptide reads, in one-letter code: Small ribosomal subunit protein bS16 (82 aa).

Belongs to the bacterial ribosomal protein bS16 family.

The sequence is that of Small ribosomal subunit protein bS16 from Clostridium botulinum (strain ATCC 19397 / Type A).